Consider the following 733-residue polypeptide: Putative cyclic nucleotide-gated ion channel 9 (733 aa).

The Cytoplasmic portion of the chain corresponds to 1 to 117; the sequence is MLDCGKKAVK…DKFLLLCNKL (117 aa). Residues 118–138 traverse the membrane as a helical segment; sequence FVTSCILAVSVDPLFLYLPFV. At 139-151 the chain is on the extracellular side; the sequence is KDNEKCIGIDRKL. The helical transmembrane segment at 152–172 threads the bilayer; sequence AIIATTLRTVIDAFYLFHMAL. The Cytoplasmic portion of the chain corresponds to 173–207; the sequence is RFRTAFVAPSSRVFGRGELVIDPAQIAKRYLQQYF. A helical transmembrane segment spans residues 208-228; the sequence is IIDFLSVLPLPQIVVWRFLYI. At 229–239 the chain is on the extracellular side; sequence SKGASVLATKR. Residues 240 to 260 form a helical membrane-spanning segment; the sequence is ALRSIILVQYIPRFIRLYPLS. Over 261–280 the chain is Cytoplasmic; sequence SELKRTAGVFAETAWAGAAY. A helical transmembrane segment spans residues 281–301; it reads YLLLYMLASHIVGAIWYLLAL. Topologically, residues 302 to 406 are extracellular; that stretch reads ERYNGCWTKV…GQGLETSTYP (105 aa). The chain crosses the membrane as a helical span at residues 407 to 427; that stretch reads GEVIFSIALAIAGLLLFALLI. Over 428–733 the chain is Cytoplasmic; that stretch reads GNMQTYLQSL…EPDFSADDTS (306 aa). A nucleoside 3',5'-cyclic phosphate contacts are provided by residues 513–637 and E584; that span reads LFEN…SRQV. The calmodulin-binding stretch occupies residues 629–644; it reads FRRLHSRQVQHTFRFY. Residues 649–678 form the IQ domain; the sequence is RTWAAIFIQAAWRRYVKKKKLEQLRKEEEE.

This sequence belongs to the cyclic nucleotide-gated cation channel (TC 1.A.1.5) family. As to quaternary structure, homotetramer or heterotetramer.

Its subcellular location is the cell membrane. In terms of biological role, putative cyclic nucleotide-gated ion channel. The polypeptide is Putative cyclic nucleotide-gated ion channel 9 (CNGC9) (Arabidopsis thaliana (Mouse-ear cress)).